A 214-amino-acid polypeptide reads, in one-letter code: Adenylate kinase (214 aa).

Residue 10-15 (GAGKGT) participates in ATP binding. The interval 30–59 (STGDMFRAAIKEGTELGKQAKALMDEGKLV) is NMP. Residues threonine 31, arginine 36, 57–59 (KLV), 85–88 (GFPR), and glutamine 92 each bind AMP. Positions 122–159 (GRRVHQPSGRTYHVVYNPPKVEGKDDVTGEDLIIRQDD) are LID. ATP contacts are provided by residues arginine 123 and 132 to 133 (TY). Arginine 156 and arginine 167 together coordinate AMP. An ATP-binding site is contributed by lysine 200.

It belongs to the adenylate kinase family. Monomer.

The protein resides in the cytoplasm. The catalysed reaction is AMP + ATP = 2 ADP. It participates in purine metabolism; AMP biosynthesis via salvage pathway; AMP from ADP: step 1/1. In terms of biological role, catalyzes the reversible transfer of the terminal phosphate group between ATP and AMP. Plays an important role in cellular energy homeostasis and in adenine nucleotide metabolism. This is Adenylate kinase from Actinobacillus pleuropneumoniae serotype 5b (strain L20).